The chain runs to 409 residues: Serine/threonine transporter SstT (409 aa).

9 consecutive transmembrane segments (helical) span residues L24 to F44, F48 to I68, I82 to M102, A142 to L162, L194 to G214, L218 to V238, I292 to M312, G319 to C339, and V365 to T385.

This sequence belongs to the dicarboxylate/amino acid:cation symporter (DAACS) (TC 2.A.23) family.

It is found in the cell inner membrane. It carries out the reaction L-serine(in) + Na(+)(in) = L-serine(out) + Na(+)(out). The enzyme catalyses L-threonine(in) + Na(+)(in) = L-threonine(out) + Na(+)(out). In terms of biological role, involved in the import of serine and threonine into the cell, with the concomitant import of sodium (symport system). This Neisseria gonorrhoeae (strain NCCP11945) protein is Serine/threonine transporter SstT.